The following is a 153-amino-acid chain: ATP synthase subunit b' (153 aa).

Residues 20-40 (TLPLMAAQVVLLTFILNALFF) traverse the membrane as a helical segment.

This sequence belongs to the ATPase B chain family. F-type ATPases have 2 components, F(1) - the catalytic core - and F(0) - the membrane proton channel. F(1) has five subunits: alpha(3), beta(3), gamma(1), delta(1), epsilon(1). F(0) has four main subunits: a(1), b(1), b'(1) and c(10-14). The alpha and beta chains form an alternating ring which encloses part of the gamma chain. F(1) is attached to F(0) by a central stalk formed by the gamma and epsilon chains, while a peripheral stalk is formed by the delta, b and b' chains.

Its subcellular location is the cellular thylakoid membrane. Its function is as follows. F(1)F(0) ATP synthase produces ATP from ADP in the presence of a proton or sodium gradient. F-type ATPases consist of two structural domains, F(1) containing the extramembraneous catalytic core and F(0) containing the membrane proton channel, linked together by a central stalk and a peripheral stalk. During catalysis, ATP synthesis in the catalytic domain of F(1) is coupled via a rotary mechanism of the central stalk subunits to proton translocation. Component of the F(0) channel, it forms part of the peripheral stalk, linking F(1) to F(0). The b'-subunit is a diverged and duplicated form of b found in plants and photosynthetic bacteria. In Prochlorococcus marinus (strain SARG / CCMP1375 / SS120), this protein is ATP synthase subunit b'.